We begin with the raw amino-acid sequence, 201 residues long: Large ribosomal subunit protein uL4 (201 aa).

The segment at 44 to 71 (RAQKTRAEVTGSGKKPWRQKGTGRARSG) is disordered.

The protein belongs to the universal ribosomal protein uL4 family. As to quaternary structure, part of the 50S ribosomal subunit.

Functionally, one of the primary rRNA binding proteins, this protein initially binds near the 5'-end of the 23S rRNA. It is important during the early stages of 50S assembly. It makes multiple contacts with different domains of the 23S rRNA in the assembled 50S subunit and ribosome. Forms part of the polypeptide exit tunnel. The polypeptide is Large ribosomal subunit protein uL4 (Pectobacterium carotovorum subsp. carotovorum (strain PC1)).